The sequence spans 297 residues: 4-hydroxy-tetrahydrodipicolinate synthase (297 aa).

Threonine 49 is a pyruvate binding site. Tyrosine 137 functions as the Proton donor/acceptor in the catalytic mechanism. Catalysis depends on lysine 166, which acts as the Schiff-base intermediate with substrate. Isoleucine 208 is a pyruvate binding site.

This sequence belongs to the DapA family. In terms of assembly, homotetramer; dimer of dimers.

Its subcellular location is the cytoplasm. The catalysed reaction is L-aspartate 4-semialdehyde + pyruvate = (2S,4S)-4-hydroxy-2,3,4,5-tetrahydrodipicolinate + H2O + H(+). Its pathway is amino-acid biosynthesis; L-lysine biosynthesis via DAP pathway; (S)-tetrahydrodipicolinate from L-aspartate: step 3/4. In terms of biological role, catalyzes the condensation of (S)-aspartate-beta-semialdehyde [(S)-ASA] and pyruvate to 4-hydroxy-tetrahydrodipicolinate (HTPA). This is 4-hydroxy-tetrahydrodipicolinate synthase from Phocaeicola vulgatus (strain ATCC 8482 / DSM 1447 / JCM 5826 / CCUG 4940 / NBRC 14291 / NCTC 11154) (Bacteroides vulgatus).